The sequence spans 123 residues: Large ribosomal subunit protein uL14 (123 aa).

This sequence belongs to the universal ribosomal protein uL14 family. Part of the 50S ribosomal subunit. Forms a cluster with proteins L3 and L19. In the 70S ribosome, L14 and L19 interact and together make contacts with the 16S rRNA in bridges B5 and B8.

Functionally, binds to 23S rRNA. Forms part of two intersubunit bridges in the 70S ribosome. The polypeptide is Large ribosomal subunit protein uL14 (Blochmanniella floridana).